We begin with the raw amino-acid sequence, 1308 residues long: Receptor tyrosine-protein kinase erbB-4 (1308 aa).

Positions 1–25 (MKLATGLWVWGSLLMAAGTVQPSAS) are cleaved as a signal peptide. Residues 26–652 (QSVCAGTENK…TLPQHARTPL (627 aa)) are Extracellular-facing. A disulfide bridge links Cys-29 with Cys-56. N-linked (GlcNAc...) asparagine glycosylation is found at Asn-138, Asn-174, and Asn-181. Disulfide bonds link Cys-156–Cys-186, Cys-189–Cys-197, Cys-193–Cys-205, Cys-213–Cys-221, Cys-217–Cys-229, Cys-230–Cys-238, Cys-234–Cys-246, Cys-249–Cys-258, Cys-262–Cys-289, Cys-293–Cys-304, Cys-308–Cys-323, and Cys-326–Cys-330. N-linked (GlcNAc...) asparagine glycosylation occurs at Asn-253. Residues Asn-410, Asn-473, and Asn-495 are each glycosylated (N-linked (GlcNAc...) asparagine). 10 disulfide bridges follow: Cys-503/Cys-512, Cys-507/Cys-520, Cys-523/Cys-532, Cys-536/Cys-552, Cys-555/Cys-569, Cys-559/Cys-577, Cys-580/Cys-589, Cys-593/Cys-614, Cys-617/Cys-625, and Cys-621/Cys-633. N-linked (GlcNAc...) asparagine glycosylation is present at Asn-548. Asn-576 carries N-linked (GlcNAc...) asparagine glycosylation. N-linked (GlcNAc...) asparagine glycosylation is present at Asn-620. The hydrophobic stretch at 653–673 (IAAGVIGGLFILVIMALTFAV) threads the membrane. The Cytoplasmic segment spans residues 674 to 1308 (YVRRKSIKKK…PPYRHRNTVV (635 aa)). The Nuclear localization signal motif lies at 676 to 684 (RRKSIKKKR). The Protein kinase domain occupies 718 to 985 (LKRVKVLGSG…RMARDPQRYL (268 aa)). Residues 724–732 (LGSGAFGTV), Lys-751, 797–799 (QLM), and 843–848 (DLAARN) contribute to the ATP site. The active-site Proton acceptor is the Asp-843. A phosphotyrosine; by autocatalysis mark is found at Tyr-875, Tyr-1035, and Tyr-1056. Residues 1032–1035 (PPIY) carry the PPxy motif 1 motif. The tract at residues 1117–1149 (PHVQEDSSTQRYSADPTVFAPERNPRGELDEEG) is disordered. A phosphotyrosine; by autocatalysis mark is found at Tyr-1150, Tyr-1162, Tyr-1188, Tyr-1202, Tyr-1242, Tyr-1258, and Tyr-1284. The PPxY motif 2 signature appears at 1282–1285 (PEYL). A PDZ-binding motif is present at residues 1290–1292 (LKP).

Belongs to the protein kinase superfamily. Tyr protein kinase family. EGF receptor subfamily. In terms of assembly, monomer in the absence of bound ligand. Homodimer or heterodimer with another ERBB family member upon ligand binding, thus forming heterotetramers. Interacts with EGFR and ERBB2. Interacts with DLG2 (via its PDZ domain), DLG3 (via its PDZ domain), DLG4 (via its PDZ domain) and SNTB2 (via its PDZ domain). Interacts with MUC1. Interacts (via its PPxy motifs) with WWOX. Interacts (via the PPxY motif 3 of isoform JM-A CYT-2) with YAP1 (via the WW domain 1 of isoform 1). Interacts (isoform JM-A CYT-1 and isoform JM-B CYT-1) with WWP1. Interacts (via its intracellular domain) with TRIM28. Interacts (via the intracellular domains of both CYT-1 and CYT-2 isoforms) with KAP1; the interaction does not phosphorylate KAP1 but represses ERBB4-mediated transcriptional activity. Interacts with PRPU, DDX23, MATR3, RBM15, ILF3, KAP1, U5S1, U2SURP, ITCH, HNRNPU, AP2A1, NULC, LEO1, WWP2, IGHG1, HXK1, GRB7 and SRRT. Interacts (phosphorylated isoform JM-A CYT-1 and isoform JM-B CYT-1) with PIK3R1. Interacts with SHC1. Interacts with GRB2. Interacts (soluble intracellular domain) with BCL2. Interacts (phosphorylated) with STAT1. Interacts with CBFA2T3. Interacts (soluble intracellular domain) with STAT5A. Post-translationally, isoform JM-A CYT-1 and isoform JM-A CYT-2 are processed by ADAM17. Proteolytic processing in response to ligand or 12-O-tetradecanoylphorbol-13-acetate stimulation results in the production of 120 kDa soluble receptor forms and intermediate membrane-anchored 80 kDa fragments (m80HER4), which are further processed by a presenilin-dependent gamma-secretase to release a cytoplasmic intracellular domain (E4ICD; E4ICD1/s80Cyt1 or E4ICD2/s80Cyt2, depending on the isoform). Membrane-anchored 80 kDa fragments of the processed isoform JM-A CYT-1 are more readily degraded by the proteasome than fragments of isoform JM-A CYT-2, suggesting a prevalence of E4ICD2 over E4ICD1. Isoform JM-B CYT-1 and isoform JM-B CYT-2 lack the ADAM17 cleavage site and are not processed by ADAM17, precluding further processing by gamma-secretase. In terms of processing, autophosphorylated on tyrosine residues in response to ligand binding. Autophosphorylation occurs in trans, i.e. one subunit of the dimeric receptor phosphorylates tyrosine residues on the other subunit. Ligands trigger phosphorylation at specific tyrosine residues, thereby creating binding sites for scaffold proteins and effectors. Constitutively phosphorylated at a basal level when overexpressed in heterologous systems; ligand binding leads to increased phosphorylation. Phosphorylation at Tyr-1035 is important for interaction with STAT1. Phosphorylation at Tyr-1056 is important for interaction with PIK3R1. Phosphorylation at Tyr-1242 is important for interaction with SHC1. Phosphorylation at Tyr-1188 may also contribute to the interaction with SHC1. Isoform JM-A CYT-2 is constitutively phosphorylated on tyrosine residues in a ligand-independent manner. E4ICD2 but not E4ICD1 is phosphorylated on tyrosine residues. Ubiquitinated. During mitosis, the ERBB4 intracellular domain is ubiquitinated by the APC/C complex and targeted to proteasomal degradation. Isoform JM-A CYT-1 and isoform JM-B CYT-1 are ubiquitinated by WWP1. The ERBB4 intracellular domain (E4ICD1) is ubiquitinated, and this involves NEDD4. In terms of tissue distribution, isoform JM-A CYT-2 and isoform JM-B CYT-2 are expressed in cerebellum, cerebral cortex, spinal cord, medulla oblongata and eye, but the kidney expresses solely isoform JM-A CYT-2 and the heart solely isoform JM-B CYT-2.

The protein localises to the cell membrane. Its subcellular location is the nucleus. It is found in the mitochondrion. The catalysed reaction is L-tyrosyl-[protein] + ATP = O-phospho-L-tyrosyl-[protein] + ADP + H(+). Its activity is regulated as follows. Binding of a cognate ligand leads to dimerization and activation by autophosphorylation on tyrosine residues. In vitro kinase activity is increased by Mg(2+). Tyrosine-protein kinase that plays an essential role as cell surface receptor for neuregulins and EGF family members and regulates development of the heart, the central nervous system and the mammary gland, gene transcription, cell proliferation, differentiation, migration and apoptosis. Required for normal cardiac muscle differentiation during embryonic development, and for postnatal cardiomyocyte proliferation. Required for normal development of the embryonic central nervous system, especially for normal neural crest cell migration and normal axon guidance. Required for mammary gland differentiation, induction of milk proteins and lactation. Acts as cell-surface receptor for the neuregulins NRG1, NRG2, NRG3 and NRG4 and the EGF family members BTC, EREG and HBEGF. Ligand binding triggers receptor dimerization and autophosphorylation at specific tyrosine residues that then serve as binding sites for scaffold proteins and effectors. Ligand specificity and signaling is modulated by alternative splicing, proteolytic processing, and by the formation of heterodimers with other ERBB family members, thereby creating multiple combinations of intracellular phosphotyrosines that trigger ligand- and context-specific cellular responses. Mediates phosphorylation of SHC1 and activation of the MAP kinases MAPK1/ERK2 and MAPK3/ERK1. Isoform JM-A CYT-1 and isoform JM-B CYT-1 phosphorylate PIK3R1, leading to the activation of phosphatidylinositol 3-kinase and AKT1 and protect cells against apoptosis. Isoform JM-A CYT-1 and isoform JM-B CYT-1 mediate reorganization of the actin cytoskeleton and promote cell migration in response to NRG1. Isoform JM-A CYT-2 and isoform JM-B CYT-2 lack the phosphotyrosine that mediates interaction with PIK3R1, and hence do not phosphorylate PIK3R1, do not protect cells against apoptosis, and do not promote reorganization of the actin cytoskeleton and cell migration. Proteolytic processing of isoform JM-A CYT-1 and isoform JM-A CYT-2 gives rise to the corresponding soluble intracellular domains (4ICD) that translocate to the nucleus, promote nuclear import of STAT5A, activation of STAT5A, mammary epithelium differentiation, cell proliferation and activation of gene expression. The ERBB4 soluble intracellular domains (4ICD) colocalize with STAT5A at the CSN2 promoter to regulate transcription of milk proteins during lactation. The ERBB4 soluble intracellular domains can also translocate to mitochondria and promote apoptosis. The chain is Receptor tyrosine-protein kinase erbB-4 (Erbb4) from Mus musculus (Mouse).